The primary structure comprises 33 residues: Vejocalcin (33 aa).

3 cysteine pairs are disulfide-bonded: Cys-3/Cys-17, Cys-10/Cys-21, and Cys-16/Cys-32. Residues 23-24 (RR) form an essential for stimulation of [3H]ryanodine binding to RYR1 region.

As to expression, expressed by the venom gland.

The protein resides in the secreted. Functionally, this toxin stabilizes ryanodine receptor 1 (RyR1) opening in a long-lasting subconductance state (60% of the full conductance state). Furthermore, it triggers calcium release from sarcoplasmic vesicles (31 nM are enough to induce a sharp release, and 65% of the total calcium is released after toxin (100 nM) addition) probably by acting as a cell-penetrating peptide (CPP). In addition, it has been shown to dose-dependently stimulate ryanodine binding to RyR1 (EC(50)=3.7 nM). It also augments the bell-shaped calcium-[3H]ryanodine binding curve that is maximal at about 10 uM calcium concentration. It binds a different site as ryanodine. It acts synergistically with caffeine. In vivo, intracerebroventricular injection into mice induces neurotoxic symptoms, followed by death. The chain is Vejocalcin from Vaejovis mexicanus (Mexican scorpion).